The sequence spans 273 residues: Alcohol dehydrogenase-related 31 kDa protein (273 aa).

11 to 34 (YVADCGGIALETCKVLMTKNIAKL) is a binding site for NAD(+). Residue Ser-139 coordinates substrate. Tyr-152 (proton acceptor) is an active-site residue.

The protein belongs to the short-chain dehydrogenases/reductases (SDR) family.

The polypeptide is Alcohol dehydrogenase-related 31 kDa protein (Adhr) (Drosophila immigrans (Fruit fly)).